Here is a 311-residue protein sequence, read N- to C-terminus: MMKRIQIIDSHTGGEPTRLVVSGFPSLGNGTMAERRDVLAREHNRYRTACILEPRGSDVMVGALLCEPVSPEAAAGVIFFNNSGYLGMCGHGTIGVVRTLHHMGRIEPGVHRIETPVGTVEATLHDDLSVSVRNVLAYRHAKAVAVDVPGYGPVKGDIAWGGNWFFLISDHGQRVAGDNVAALTAYSSAVREGLERAGITGANGGEIDHIELFADDAEHDSRSFVLCPGHAYDRSPCGTGTSAKLACLAADGKLEPGVVWRQASVIGSVFQASYAQADGGIVPTIRGSAHLSAEATLLIEEDDPFGWGIVS.

Cys-89 functions as the Proton acceptor in the catalytic mechanism. Residues 90-91, His-209, and Asp-233 each bind substrate; that span reads GH. Cys-237 serves as the catalytic Proton donor. 238–239 is a binding site for substrate; sequence GT.

Belongs to the proline racemase family.

It catalyses the reaction trans-4-hydroxy-L-proline = cis-4-hydroxy-D-proline. In terms of biological role, catalyzes the epimerization of trans-4-hydroxy-L-proline (t4LHyp) to cis-4-hydroxy-D-proline (c4DHyp). Is likely involved in a degradation pathway that converts t4LHyp to alpha-ketoglutarate. Displays no proline racemase activity. The chain is 4-hydroxyproline 2-epimerase from Burkholderia ambifaria (strain ATCC BAA-244 / DSM 16087 / CCUG 44356 / LMG 19182 / AMMD) (Burkholderia cepacia (strain AMMD)).